Consider the following 459-residue polypeptide: Probable PTS system sucrose-specific EIIBC component (459 aa).

Residues 1-86 form the PTS EIIB type-1 domain; it reads MHKEIAKELL…VHVWETAPSE (86 aa). C25 (phosphocysteine intermediate; for EIIB activity) is an active-site residue. A PTS EIIC type-1 domain is found at 106 to 459; that stretch reads KTLSDIFVPI…LFLGFKEETE (354 aa). Helical transmembrane passes span 111–131, 147–167, 177–197, 209–229, 245–265, 288–308, 329–349, 360–380, 388–408, 412–432, and 434–454; these read IFVP…LIGM, MLDL…GFSA, LGAV…SMLG, LHIP…SVFV, LDVV…ALIV, AGIA…LSGL, FLVP…LAVF, IALP…VFGV, FIGA…VQVV, YGLT…ANFV, and YMIG…FLGF.

The protein localises to the cell membrane. In terms of biological role, the phosphoenolpyruvate-dependent sugar phosphotransferase system (sugar PTS), a major carbohydrate active -transport system, catalyzes the phosphorylation of incoming sugar substrates concomitantly with their translocation across the cell membrane. This system may be involved in sucrose transport. The EIIB domain is mainly phosphorylated by the EIIA domains of GamP and PtsA/YpqE. Functionally, negatively regulates SacY activity by catalyzing its phosphorylation on 'His-99'. The protein is Probable PTS system sucrose-specific EIIBC component (sacX) of Bacillus subtilis (strain 168).